A 272-amino-acid polypeptide reads, in one-letter code: Shikimate dehydrogenase (NADP(+)) (272 aa).

Shikimate contacts are provided by residues 14–16 (SKS) and T61. Residue K65 is the Proton acceptor of the active site. E77 lines the NADP(+) pocket. N86 and D102 together coordinate shikimate. NADP(+) is bound by residues 126 to 130 (GAGGA), 149 to 154 (NRTVSR), and M213. Y215 is a binding site for shikimate. G237 contacts NADP(+).

This sequence belongs to the shikimate dehydrogenase family. In terms of assembly, homodimer.

It catalyses the reaction shikimate + NADP(+) = 3-dehydroshikimate + NADPH + H(+). The protein operates within metabolic intermediate biosynthesis; chorismate biosynthesis; chorismate from D-erythrose 4-phosphate and phosphoenolpyruvate: step 4/7. Its function is as follows. Involved in the biosynthesis of the chorismate, which leads to the biosynthesis of aromatic amino acids. Catalyzes the reversible NADPH linked reduction of 3-dehydroshikimate (DHSA) to yield shikimate (SA). The chain is Shikimate dehydrogenase (NADP(+)) from Escherichia coli O157:H7.